The sequence spans 720 residues: Glycine--tRNA ligase beta subunit (720 aa).

Belongs to the class-II aminoacyl-tRNA synthetase family. Tetramer of two alpha and two beta subunits.

It is found in the cytoplasm. It carries out the reaction tRNA(Gly) + glycine + ATP = glycyl-tRNA(Gly) + AMP + diphosphate. In Dinoroseobacter shibae (strain DSM 16493 / NCIMB 14021 / DFL 12), this protein is Glycine--tRNA ligase beta subunit.